The following is a 77-amino-acid chain: Acyl carrier protein (77 aa).

The Carrier domain occupies 2 to 77; that stretch reads STVEERVKKI…DAIDYIVAHT (76 aa). Serine 37 carries the post-translational modification O-(pantetheine 4'-phosphoryl)serine.

It belongs to the acyl carrier protein (ACP) family. In terms of processing, 4'-phosphopantetheine is transferred from CoA to a specific serine of apo-ACP by AcpS. This modification is essential for activity because fatty acids are bound in thioester linkage to the sulfhydryl of the prosthetic group.

Its subcellular location is the cytoplasm. The protein operates within lipid metabolism; fatty acid biosynthesis. Functionally, carrier of the growing fatty acid chain in fatty acid biosynthesis. This chain is Acyl carrier protein, found in Marinobacter nauticus (strain ATCC 700491 / DSM 11845 / VT8) (Marinobacter aquaeolei).